A 575-amino-acid polypeptide reads, in one-letter code: Carboxylesterase 5A (575 aa).

The first 20 residues, 1-20 (MSGNWVHPGQILIWAIWVLA), serve as a signal peptide directing secretion. An intrachain disulfide couples Cys-94 to Cys-121. Ser-226 functions as the Acyl-ester intermediate in the catalytic mechanism. Asn-281 carries N-linked (GlcNAc...) asparagine glycosylation. The active-site Charge relay system is the Glu-345. Asn-363 is a glycosylation site (N-linked (GlcNAc...) asparagine). The Charge relay system role is filled by His-454. 2 N-linked (GlcNAc...) asparagine glycosylation sites follow: Asn-513 and Asn-524.

It belongs to the type-B carboxylesterase/lipase family. Post-translationally, N-glycosylated.

The protein localises to the secreted. It catalyses the reaction a carboxylic ester + H2O = an alcohol + a carboxylate + H(+). Involved in the detoxification of xenobiotics and in the activation of ester and amide prodrugs. This is Carboxylesterase 5A (CES5A) from Homo sapiens (Human).